A 104-amino-acid polypeptide reads, in one-letter code: Type IV secretion system protein PtlB homolog (104 aa).

Residues 30–50 (IALLGIWFSIAFLALFPVALL) form a helical membrane-spanning segment.

It belongs to the virB3 family.

It localises to the cell membrane. The sequence is that of Type IV secretion system protein PtlB homolog (ptlB) from Bordetella parapertussis (strain 12822 / ATCC BAA-587 / NCTC 13253).